Here is a 221-residue protein sequence, read N- to C-terminus: Thymidylate kinase (221 aa).

10-17 (GIDGAGKT) provides a ligand contact to ATP.

This sequence belongs to the thymidylate kinase family.

It catalyses the reaction dTMP + ATP = dTDP + ADP. Functionally, phosphorylation of dTMP to form dTDP in both de novo and salvage pathways of dTTP synthesis. In Desulforudis audaxviator (strain MP104C), this protein is Thymidylate kinase.